The sequence spans 479 residues: Ribosomal RNA small subunit methyltransferase F (479 aa).

Residues 125 to 131 (AAAPGSK), Glu149, Asp176, and Asp194 contribute to the S-adenosyl-L-methionine site. Catalysis depends on Cys247, which acts as the Nucleophile.

The protein belongs to the class I-like SAM-binding methyltransferase superfamily. RsmB/NOP family.

The protein resides in the cytoplasm. The catalysed reaction is cytidine(1407) in 16S rRNA + S-adenosyl-L-methionine = 5-methylcytidine(1407) in 16S rRNA + S-adenosyl-L-homocysteine + H(+). Its function is as follows. Specifically methylates the cytosine at position 1407 (m5C1407) of 16S rRNA. In Escherichia coli O81 (strain ED1a), this protein is Ribosomal RNA small subunit methyltransferase F.